Here is a 148-residue protein sequence, read N- to C-terminus: Short form salivary protein D7S1 (148 aa).

Residues 1–21 form the signal peptide; sequence MKQNVFFLIAYFSLVFCMCNA. 3 disulfides stabilise this stretch: Cys-28-Cys-61, Cys-41-Cys-147, and Cys-103-Cys-119.

It belongs to the PBP/GOBP family. In terms of tissue distribution, female salivary gland.

Its subcellular location is the secreted. In terms of biological role, in contrast to the related D7 salivary proteins that can bind biogenic amines, does not bind serotonin. This Aedes aegypti (Yellowfever mosquito) protein is Short form salivary protein D7S1.